The chain runs to 428 residues: Adenylosuccinate synthetase (428 aa).

GTP-binding positions include 12–18 and 40–42; these read GDEGKGK and GHT. D13 acts as the Proton acceptor in catalysis. D13 and G40 together coordinate Mg(2+). Residues 13–16, 38–41, T130, R144, Q225, T240, and R304 each bind IMP; these read DEGK and NAGH. The Proton donor role is filled by H41. A substrate-binding site is contributed by 300–306; it reads ATTGRPR. GTP contacts are provided by residues R306, 332-334, and 415-417; these read KLD and SVG.

Belongs to the adenylosuccinate synthetase family. As to quaternary structure, homodimer. Mg(2+) serves as cofactor.

It localises to the cytoplasm. The catalysed reaction is IMP + L-aspartate + GTP = N(6)-(1,2-dicarboxyethyl)-AMP + GDP + phosphate + 2 H(+). It functions in the pathway purine metabolism; AMP biosynthesis via de novo pathway; AMP from IMP: step 1/2. Plays an important role in the de novo pathway of purine nucleotide biosynthesis. Catalyzes the first committed step in the biosynthesis of AMP from IMP. The polypeptide is Adenylosuccinate synthetase (Lawsonia intracellularis (strain PHE/MN1-00)).